The primary structure comprises 609 residues: Thiamine metabolism regulatory protein THI3 (609 aa).

Residues 578–598 (SKQVQEENENSSAVNTPTPEF) are disordered.

The protein belongs to the TPP enzyme family. Requires Mg(2+) as cofactor. The cofactor is thiamine diphosphate.

It localises to the nucleus. It carries out the reaction 4-methyl-2-oxopentanoate + H(+) = 3-methylbutanal + CO2. It catalyses the reaction (S)-3-methyl-2-oxopentanoate + H(+) = 2-methylbutanal + CO2. The protein operates within amino-acid degradation; Ehrlich pathway. In terms of biological role, one of five 2-oxo acid decarboxylases (PDC1, PDC5, PDC6, ARO10, and THI3) involved in amino acid catabolism. The enzyme catalyzes the decarboxylation of amino acids, which, in a first step, have been transaminated to the corresponding 2-oxo acids (alpha-keto-acids). In a third step, the resulting aldehydes are reduced to alcohols, collectively referred to as fusel oils or alcohols. Its preferred substrates are the transaminated amino acids derived from leucine (4-methyl-2-oxopentanoate, also alpha-keto-isocaproate) and isoleucine ((3S)-3-methyl-2-oxopentanoate, also alpha-keto-beta-methylvalerate), whereas transaminated valine, transaminated aromatic amino acids, and pyruvate are no substrates. In analogy to the pyruvate decarboxylases the enzyme may in a side-reaction catalyze condensation (or carboligation) reactions leading to the formation of 2-hydroxy ketone, collectively called acyloins. The enzyme is also positively regulating the thiamine metabolism by a molecular mechanism that may involve thiamine concentration sensing and signal transmission. This Saccharomyces cerevisiae (strain ATCC 204508 / S288c) (Baker's yeast) protein is Thiamine metabolism regulatory protein THI3 (THI3).